The primary structure comprises 621 residues: Membrane protein insertase YidC (621 aa).

Helical transmembrane passes span 1–21 (MDKN…GFSI), 363–383 (GWGL…KVLV), 436–456 (MGGC…FFFV), 486–506 (IPLL…TNIL), 527–547 (LMMY…SSGL), and 549–569 (YYYF…RKTT).

This sequence belongs to the OXA1/ALB3/YidC family. Type 1 subfamily. Interacts with the Sec translocase complex via SecD. Specifically interacts with transmembrane segments of nascent integral membrane proteins during membrane integration.

It is found in the cell inner membrane. In terms of biological role, required for the insertion and/or proper folding and/or complex formation of integral membrane proteins into the membrane. Involved in integration of membrane proteins that insert both dependently and independently of the Sec translocase complex, as well as at least some lipoproteins. Aids folding of multispanning membrane proteins. This Phocaeicola vulgatus (strain ATCC 8482 / DSM 1447 / JCM 5826 / CCUG 4940 / NBRC 14291 / NCTC 11154) (Bacteroides vulgatus) protein is Membrane protein insertase YidC.